We begin with the raw amino-acid sequence, 214 residues long: Probable transaldolase (214 aa).

Catalysis depends on Lys83, which acts as the Schiff-base intermediate with substrate.

This sequence belongs to the transaldolase family. Type 3B subfamily.

The protein localises to the cytoplasm. It catalyses the reaction D-sedoheptulose 7-phosphate + D-glyceraldehyde 3-phosphate = D-erythrose 4-phosphate + beta-D-fructose 6-phosphate. The protein operates within carbohydrate degradation; pentose phosphate pathway; D-glyceraldehyde 3-phosphate and beta-D-fructose 6-phosphate from D-ribose 5-phosphate and D-xylulose 5-phosphate (non-oxidative stage): step 2/3. In terms of biological role, transaldolase is important for the balance of metabolites in the pentose-phosphate pathway. This chain is Probable transaldolase, found in Geotalea uraniireducens (strain Rf4) (Geobacter uraniireducens).